Consider the following 675-residue polypeptide: Protein PALS1 (675 aa).

A disordered region spans residues 1 to 78 (MTTSHMNGHV…RREEEGKKQE (78 aa)). A required for the correct localization of PALS1 and PATJ at cell-cell contacts and the normal formation of tight junctions and adherens junctions region spans residues 1-345 (MTTSHMNGHV…QQIKPPPAKE (345 aa)). Composition is skewed to basic and acidic residues over residues 10 to 36 (VTEESDNEVKNVDLASPEEHQKHREMA) and 54 to 78 (AQLERIRQQQEDMRRRREEEGKKQE). Ser14 and Ser25 each carry phosphoserine. The interaction with PARD6B stretch occupies residues 21–140 (VDLASPEEHQ…LKHIQHTLVD (120 aa)). 2 positions are modified to phosphoserine: Ser83 and Ser84. 2 consecutive L27 domains span residues 120–177 (KILE…NKAS) and 179–235 (PFPL…MQLE). The tract at residues 181 to 243 (PLISNAQDLA…LEPFTDERVY (63 aa)) is interaction with LIN7C. In terms of domain architecture, PDZ spans 256–336 (IVRIEKARDI…TLTFVLIPSQ (81 aa)). An SH3 domain is found at 345 to 417 (ETVIHVKAHF…PGKSFQQQRE (73 aa)). Positions 479-660 (KRPIILIGPQ…AYQELLRLIN (182 aa)) constitute a Guanylate kinase-like domain. ATP is bound at residue 486-493 (GPQNCGQN).

The protein belongs to the MAGUK family. In terms of assembly, heterodimer with MPP1. Forms a heterotrimeric complex composed of PALS1, LIN7B and PATJ; the N-terminal L27 domain of PALS1 interacts with the L27 domain of PATJ and the C-terminal L27 domain of PALS1 interacts with the L27 domain of LIN7B. Component of a complex composed of PALS1, CRB1 and MPP4. Component of a complex whose core is composed of ARHGAP17, AMOT, PALS1, PATJ and PARD3/PAR3. Component of a complex composed of PALS1, CRB1 and EPB41L5. Within the complex, interacts (via HOOK domain) with EPB41L5 (via FERM domain), and interacts with CRB1 (via intracellular domain). Component of a complex composed of PALS1, MPP3 and CRB1; PALS1 acts as a bridging protein between MPP3 (via guanylate kinase-like domain) and CRB1. Component of a complex composed of CRB3, PALS1 and PATJ. As part of the Crumbs complex; interacts with WWP1, the interaction is enhanced by AMOTL2 and facilitates WWP1 localization to the plasma membrane. The Crumbs complex promotes monoubiquitination of AMOTL2 by WWP1, which activates the Hippo signaling pathway. Interacts (via PDZ domain) with PATJ (via N-terminus). Interacts with EZR. Interacts (via PDZ domain) with CRB1 (via C-terminal ERLI motif). While the PDZ domain is sufficient for interaction with CRB1, the adjacent SH3 and guanylate kinase-like domains are likely to contribute to a high affinity interaction. Interacts with WWTR1/TAZ (via WW domain). Interacts with MPP7. Interacts (via PDZ domain) with CRB3 (via C-terminus). Interacts with LIN7C. Interacts with MPDZ. Interacts with PARD6B. Interacts with SC6A1. Interacts with CDH5; the interaction promotes PALS1 localization to cell junctions and is required for CDH5-mediated vascular lumen formation and endothelial cell. Interacts with NPHP1 (via coiled coil and SH3 domains). Interacts with NPHP4. Interacts with CRB2.

The protein localises to the golgi apparatus. It localises to the cell membrane. It is found in the endomembrane system. Its subcellular location is the cell junction. The protein resides in the tight junction. The protein localises to the adherens junction. It localises to the cell projection. It is found in the axon. Its subcellular location is the perikaryon. The protein resides in the apical cell membrane. Plays a role in tight junction biogenesis and in the establishment of cell polarity in epithelial cells. Also involved in adherens junction biogenesis by ensuring correct localization of the exocyst complex protein EXOC4/SEC8 which allows trafficking of adherens junction structural component CDH1 to the cell surface. Plays a role through its interaction with CDH5 in vascular lumen formation and endothelial membrane polarity. Required during embryonic and postnatal retinal development. Required for the maintenance of cerebellar progenitor cells in an undifferentiated proliferative state, preventing premature differentiation, and is required for cerebellar histogenesis, fissure formation, cerebellar layer organization and cortical development. Plays a role in neuronal progenitor cell survival, potentially via promotion of mTOR signaling. Plays a role in the radial and longitudinal extension of the myelin sheath in Schwann cells. May modulate SC6A1/GAT1-mediated GABA uptake by stabilizing the transporter. May play a role in the T-cell receptor-mediated activation of NF-kappa-B. Required for localization of EZR to the apical membrane of parietal cells and may play a role in the dynamic remodeling of the apical cytoskeleton. Required for the normal polarized localization of the vesicular marker STX4. Required for the correct trafficking of the myelin proteins PMP22 and MAG. Involved in promoting phosphorylation and cytoplasmic retention of transcriptional coactivators YAP1 and WWTR1/TAZ which leads to suppression of TGFB1-dependent transcription of target genes such as CCN2/CTGF, SERPINE1/PAI1, SNAI1/SNAIL1 and SMAD7. This is Protein PALS1 from Canis lupus familiaris (Dog).